Consider the following 97-residue polypeptide: Small ribosomal subunit protein bS6 (97 aa).

The protein belongs to the bacterial ribosomal protein bS6 family.

In terms of biological role, binds together with bS18 to 16S ribosomal RNA. This Lactococcus lactis subsp. lactis (strain IL1403) (Streptococcus lactis) protein is Small ribosomal subunit protein bS6 (rpsF).